We begin with the raw amino-acid sequence, 212 residues long: tRNA (guanine-N(7)-)-methyltransferase (212 aa).

Positions 44, 69, 96, and 118 each coordinate S-adenosyl-L-methionine. D118 is an active-site residue. K122 is a binding site for substrate. An interaction with RNA region spans residues R124–R129. Substrate is bound by residues D154 and T192–E195.

The protein belongs to the class I-like SAM-binding methyltransferase superfamily. TrmB family.

It carries out the reaction guanosine(46) in tRNA + S-adenosyl-L-methionine = N(7)-methylguanosine(46) in tRNA + S-adenosyl-L-homocysteine. Its pathway is tRNA modification; N(7)-methylguanine-tRNA biosynthesis. In terms of biological role, catalyzes the formation of N(7)-methylguanine at position 46 (m7G46) in tRNA. The protein is tRNA (guanine-N(7)-)-methyltransferase of Pediococcus pentosaceus (strain ATCC 25745 / CCUG 21536 / LMG 10740 / 183-1w).